The chain runs to 403 residues: Lipase lipl-5 (403 aa).

The N-terminal stretch at 1 to 18 (MWRFAVFLAAFFVQDVVG) is a signal peptide. A glycan (N-linked (GlcNAc...) asparagine) is linked at Asn-64. The active-site Nucleophile is Ser-167. A glycan (N-linked (GlcNAc...) asparagine) is linked at Asn-271. Active-site charge relay system residues include Asp-343 and His-375.

This sequence belongs to the AB hydrolase superfamily. Lipase family.

It is found in the lysosome lumen. The protein resides in the secreted. Functionally, lipase involved in lipid homeostasis. Regulates mitochondrial lipid composition, in particular cardiolipins and coenzyme Q-9 levels, in response to nutrient availability. Does not affect global triglyceride levels in response to nutrient availability. However, in coelomocytes, specifically promotes triglyceride catabolism and lifespan extension in response to nutrient deprivation. The protein is Lipase lipl-5 of Caenorhabditis elegans.